Reading from the N-terminus, the 425-residue chain is Isocitrate dehydrogenase [NADP] (425 aa).

Thr114 contacts NADP(+). Positions 123, 125, 129, 139, and 162 each coordinate D-threo-isocitrate. Asp316 provides a ligand contact to Mg(2+). Residues 348-354 (HGTAPKY), Asn361, Tyr400, and Arg404 contribute to the NADP(+) site.

This sequence belongs to the isocitrate and isopropylmalate dehydrogenases family. In terms of assembly, homodimer. The cofactor is Mg(2+). Mn(2+) serves as cofactor.

It carries out the reaction D-threo-isocitrate + NADP(+) = 2-oxoglutarate + CO2 + NADPH. Its function is as follows. Catalyzes the oxidative decarboxylation of isocitrate to 2-oxoglutarate and carbon dioxide with the concomitant reduction of NADP(+). The protein is Isocitrate dehydrogenase [NADP] (icd) of Helicobacter pylori (strain J99 / ATCC 700824) (Campylobacter pylori J99).